The primary structure comprises 186 residues: Lipoprotein signal peptidase (186 aa).

3 consecutive transmembrane segments (helical) span residues 11–31 (WIPL…KLLV), 44–64 (VLGD…FSIG), and 70–90 (VLRT…IVFS). Catalysis depends on residues Asp-128 and Asp-150. The helical transmembrane segment at 145–165 (AFNIADAVIMTCGLLLIISFI) threads the bilayer.

This sequence belongs to the peptidase A8 family.

Its subcellular location is the cell inner membrane. The catalysed reaction is Release of signal peptides from bacterial membrane prolipoproteins. Hydrolyzes -Xaa-Yaa-Zaa-|-(S,diacylglyceryl)Cys-, in which Xaa is hydrophobic (preferably Leu), and Yaa (Ala or Ser) and Zaa (Gly or Ala) have small, neutral side chains.. It participates in protein modification; lipoprotein biosynthesis (signal peptide cleavage). In terms of biological role, this protein specifically catalyzes the removal of signal peptides from prolipoproteins. This chain is Lipoprotein signal peptidase, found in Treponema pallidum (strain Nichols).